The chain runs to 305 residues: Acetaldehyde dehydrogenase (305 aa).

13-16 (SGNI) lines the NAD(+) pocket. C128 functions as the Acyl-thioester intermediate in the catalytic mechanism. Residues 159–167 (SAGPGTRQN) and N278 contribute to the NAD(+) site.

This sequence belongs to the acetaldehyde dehydrogenase family.

The enzyme catalyses acetaldehyde + NAD(+) + CoA = acetyl-CoA + NADH + H(+). This Roseiflexus castenholzii (strain DSM 13941 / HLO8) protein is Acetaldehyde dehydrogenase.